Here is a 97-residue protein sequence, read N- to C-terminus: C-C motif chemokine 8 (97 aa).

An N-terminal signal peptide occupies residues 1-23; sequence MKIYAVLLCLLLIAVPVSPEKLT. 2 cysteine pairs are disulfide-bonded: Cys-32–Cys-57 and Cys-33–Cys-73.

Belongs to the intercrine beta (chemokine CC) family. As to quaternary structure, monomer or homodimer; in equilibrium.

It localises to the secreted. Chemotactic factor that attracts monocytes. This protein can bind heparin. This is C-C motif chemokine 8 (Ccl8) from Mus musculus (Mouse).